We begin with the raw amino-acid sequence, 305 residues long: GMP synthase [glutamine-hydrolyzing] subunit B (305 aa).

The GMPS ATP-PPase domain maps to 2-184; sequence VKTEKFIQKS…LGLPPEIQHR (183 aa). 29–35 contributes to the ATP binding site; that stretch reads SGGVDSS.

Heterodimer composed of a glutamine amidotransferase subunit (A) and a GMP-binding subunit (B).

It carries out the reaction XMP + L-glutamine + ATP + H2O = GMP + L-glutamate + AMP + diphosphate + 2 H(+). Its pathway is purine metabolism; GMP biosynthesis; GMP from XMP (L-Gln route): step 1/1. Functionally, catalyzes the synthesis of GMP from XMP. This chain is GMP synthase [glutamine-hydrolyzing] subunit B, found in Methanoregula boonei (strain DSM 21154 / JCM 14090 / 6A8).